Consider the following 82-residue polypeptide: Probable [Fe-S]-dependent transcriptional repressor (82 aa).

Iron-sulfur cluster contacts are provided by cysteine 56, cysteine 61, cysteine 64, and cysteine 71.

The protein belongs to the FeoC family.

May function as a transcriptional regulator that controls feoABC expression. This is Probable [Fe-S]-dependent transcriptional repressor from Yersinia enterocolitica serotype O:8 / biotype 1B (strain NCTC 13174 / 8081).